The chain runs to 1057 residues: Carbamoyl phosphate synthase large chain (1057 aa).

The carboxyphosphate synthetic domain stretch occupies residues 1–401; it reads MPKRNDIKTI…SLLKAIRSLE (401 aa). Positions 129, 169, 175, 176, 208, 210, 215, 241, 242, 243, 284, and 298 each coordinate ATP. The ATP-grasp 1 domain occupies 133 to 327; that stretch reads RTLMNYLNVP…IAKLAAKIAV (195 aa). The Mg(2+) site is built by Gln284, Glu298, and Asn300. The Mn(2+) site is built by Gln284, Glu298, and Asn300. The oligomerization domain stretch occupies residues 402-546; sequence YGVHHLGLPN…YGTYETENES (145 aa). Positions 547–929 are carbamoyl phosphate synthetic domain; sequence IITDKEKILV…ALFKGLTGSG (383 aa). The 191-residue stretch at 671 to 861 folds into the ATP-grasp 2 domain; it reads EALLRKINVP…MAQLAMRAII (191 aa). Positions 707, 746, 748, 752, 777, 778, 779, 780, 820, and 832 each coordinate ATP. Mg(2+) contacts are provided by Gln820, Glu832, and Asn834. Mn(2+) is bound by residues Gln820, Glu832, and Asn834. Residues 930–1057 enclose the MGS-like domain; that stretch reads VEVKDHGTVL…ESMTFTMRQM (128 aa). Residues 930-1057 form an allosteric domain region; the sequence is VEVKDHGTVL…ESMTFTMRQM (128 aa).

The protein belongs to the CarB family. Composed of two chains; the small (or glutamine) chain promotes the hydrolysis of glutamine to ammonia, which is used by the large (or ammonia) chain to synthesize carbamoyl phosphate. Tetramer of heterodimers (alpha,beta)4. Requires Mg(2+) as cofactor. Mn(2+) serves as cofactor.

It catalyses the reaction hydrogencarbonate + L-glutamine + 2 ATP + H2O = carbamoyl phosphate + L-glutamate + 2 ADP + phosphate + 2 H(+). It carries out the reaction hydrogencarbonate + NH4(+) + 2 ATP = carbamoyl phosphate + 2 ADP + phosphate + 2 H(+). It participates in amino-acid biosynthesis; L-arginine biosynthesis; carbamoyl phosphate from bicarbonate: step 1/1. The protein operates within pyrimidine metabolism; UMP biosynthesis via de novo pathway; (S)-dihydroorotate from bicarbonate: step 1/3. Its function is as follows. Large subunit of the glutamine-dependent carbamoyl phosphate synthetase (CPSase). CPSase catalyzes the formation of carbamoyl phosphate from the ammonia moiety of glutamine, carbonate, and phosphate donated by ATP, constituting the first step of 2 biosynthetic pathways, one leading to arginine and/or urea and the other to pyrimidine nucleotides. The large subunit (synthetase) binds the substrates ammonia (free or transferred from glutamine from the small subunit), hydrogencarbonate and ATP and carries out an ATP-coupled ligase reaction, activating hydrogencarbonate by forming carboxy phosphate which reacts with ammonia to form carbamoyl phosphate. In Staphylococcus aureus (strain bovine RF122 / ET3-1), this protein is Carbamoyl phosphate synthase large chain.